A 305-amino-acid polypeptide reads, in one-letter code: Superkiller complex protein 8 (305 aa).

An N-acetylmethionine modification is found at Met1. At Thr2 the chain carries N-acetylthreonine; in WD repeat-containing protein 61, N-terminally processed. WD repeat units follow at residues 14-57, 62-101, 104-143, 146-187, 188-227, 230-269, and 272-305; these read AHDD…LELQ, GHQL…QMKS, AGPV…KEYS, TRGK…HTLE, GHAM…LAGT, GHAS…CIHT, and DHQD…DCPI.

It belongs to the SKI8 family. As to quaternary structure, component of the PAF1 complex, which consists of CDC73, PAF1, LEO1, CTR9, RTF1 and SKIC8. The PAF1 complex interacts with PHF5A. Within the PAF1 complex interacts directly with PHF5A. Component of the SKI complex which consists of SKIC2, SKIC3 and SKIC8.

The protein resides in the nucleus. It is found in the cytoplasm. Component of the PAF1 complex (PAF1C) which has multiple functions during transcription by RNA polymerase II and is implicated in regulation of development and maintenance of embryonic stem cell pluripotency. PAF1C associates with RNA polymerase II through interaction with POLR2A CTD non-phosphorylated and 'Ser-2'- and 'Ser-5'-phosphorylated forms and is involved in transcriptional elongation, acting both independently and synergistically with TCEA1 and in cooperation with the DSIF complex and HTATSF1. PAF1C is required for transcription of Hox and Wnt target genes. PAF1C is involved in hematopoiesis and stimulates transcriptional activity of KMT2A/MLL1; it promotes leukemogenesis through association with KMT2A/MLL1-rearranged oncoproteins, such as KMT2A/MLL1-MLLT3/AF9 and KMT2A/MLL1-MLLT1/ENL. PAF1C is involved in histone modifications such as ubiquitination of histone H2B and methylation on histone H3 'Lys-4' (H3K4me3). PAF1C recruits the RNF20/40 E3 ubiquitin-protein ligase complex and the E2 enzyme UBE2A or UBE2B to chromatin which mediate monoubiquitination of 'Lys-120' of histone H2B (H2BK120ub1); UB2A/B-mediated H2B ubiquitination is proposed to be coupled to transcription. PAF1C is involved in mRNA 3' end formation probably through association with cleavage and poly(A) factors. In case of infection by influenza A strain H3N2, PAF1C associates with viral NS1 protein, thereby regulating gene transcription. Required for mono- and trimethylation on histone H3 'Lys-4' (H3K4me3), dimethylation on histone H3 'Lys-79' (H3K4me3). Required for Hox gene transcription. Also acts as a component of the SKI complex, a multiprotein complex that assists the RNA-degrading exosome during the mRNA decay and quality-control pathways. The SKI complex catalyzes mRNA extraction from 80S ribosomal complexes in the 3'-5' direction and channels mRNA to the cytosolic exosome for degradation. SKI-mediated extraction of mRNA from stalled ribosomes allow binding of the Pelota-HBS1L complex and subsequent ribosome disassembly by ABCE1 for ribosome recycling. The chain is Superkiller complex protein 8 (Skic8) from Rattus norvegicus (Rat).